A 505-amino-acid chain; its full sequence is Lysine--tRNA ligase (505 aa).

Mg(2+) contacts are provided by Glu415 and Glu422.

This sequence belongs to the class-II aminoacyl-tRNA synthetase family. In terms of assembly, homodimer. Mg(2+) serves as cofactor.

The protein localises to the cytoplasm. It catalyses the reaction tRNA(Lys) + L-lysine + ATP = L-lysyl-tRNA(Lys) + AMP + diphosphate. This chain is Lysine--tRNA ligase, found in Vibrio parahaemolyticus serotype O3:K6 (strain RIMD 2210633).